Consider the following 425-residue polypeptide: Aromatic prenyl transferase PC-22 (425 aa).

Residues 83 to 84 and glutamate 92 each bind L-tryptophan; that span reads GI. Substrate-binding residues include arginine 107, lysine 198, tyrosine 200, arginine 265, lysine 267, tyrosine 269, tyrosine 345, tyrosine 410, and tyrosine 414.

This sequence belongs to the tryptophan dimethylallyltransferase family. Homodimer.

It participates in secondary metabolite biosynthesis. In terms of biological role, aromatic prenyl transferase; part of the gene cluster that mediates the biosynthesis of the indole diterpenes penitrems. The geranylgeranyl diphosphate (GGPP) synthase penG catalyzes the first step in penitrem biosynthesis via conversion of farnesyl pyrophosphate and isopentyl pyrophosphate into geranylgeranyl pyrophosphate (GGPP). Condensation of indole-3-glycerol phosphate with GGPP by the prenyl transferase penC then forms 3-geranylgeranylindole (3-GGI). Epoxidation by the FAD-dependent monooxygenase penM leads to a epoxidized-GGI that is substrate of the terpene cyclase penB for cyclization to yield paspaline. Paspaline is subsequently converted to 13-desoxypaxilline by the cytochrome P450 monooxygenase penP, the latter being then converted to paxilline by the cytochrome P450 monooxygenase penQ. Paxilline is converted to beta-paxitriol via C-10 ketoreduction by the short-chain dehydrogenase PC-15 which can be monoprenylated at the C-20 by the indole diterpene prenyltransferase penD. A two-step elimination (acetylation and elimination) process performed by the O-acetyltransferase PC-16 and the P.simplicissimum ptmI-ortholog not yet identified in P.crustosum, leads to the production of the prenylated form of penijanthine. The FAD-linked oxidoreductase ptmO then converts the prenylated form of penijanthine into PC-M5 which is in turn transformed into PC-M4 by the aromatic dimethylallyltransferase PC-22. A series of oxidation steps involving 4 cytochrome P450 monooxygenases (PC-21, PC-05, PC-23, PC-20) and a FAD-dependent monooxygenase (PC-14) are required for the transformation of PC-M4 to penitrems A and E. Synthesis of these final products is proposed to proceed via penitrems D and C (PC-21, PC-05, PC-14) and penitrems B and F (PC-21, PC-05, PC-14, PC-23). The polypeptide is Aromatic prenyl transferase PC-22 (Penicillium crustosum (Blue mold fungus)).